Here is a 178-residue protein sequence, read N- to C-terminus: Large ribosomal subunit protein uL6 (178 aa).

The protein belongs to the universal ribosomal protein uL6 family. In terms of assembly, part of the 50S ribosomal subunit.

Its function is as follows. This protein binds to the 23S rRNA, and is important in its secondary structure. It is located near the subunit interface in the base of the L7/L12 stalk, and near the tRNA binding site of the peptidyltransferase center. The polypeptide is Large ribosomal subunit protein uL6 (Micrococcus luteus (Micrococcus lysodeikticus)).